Consider the following 567-residue polypeptide: Urease subunit alpha (567 aa).

Positions 129–567 (GGVDSHIHFI…LPLAQRYFLF (439 aa)) constitute a Urease domain. Ni(2+) contacts are provided by H134, H136, and K217. An N6-carboxylysine modification is found at K217. H219 contacts substrate. Ni(2+)-binding residues include H246 and H272. H320 serves as the catalytic Proton donor. D360 contacts Ni(2+).

This sequence belongs to the metallo-dependent hydrolases superfamily. Urease alpha subunit family. As to quaternary structure, heterotrimer of UreA (gamma), UreB (beta) and UreC (alpha) subunits. Three heterotrimers associate to form the active enzyme. The cofactor is Ni cation. Post-translationally, carboxylation allows a single lysine to coordinate two nickel ions.

It is found in the cytoplasm. The enzyme catalyses urea + 2 H2O + H(+) = hydrogencarbonate + 2 NH4(+). Its pathway is nitrogen metabolism; urea degradation; CO(2) and NH(3) from urea (urease route): step 1/1. This is Urease subunit alpha from Pseudomonas putida (strain ATCC 700007 / DSM 6899 / JCM 31910 / BCRC 17059 / LMG 24140 / F1).